The chain runs to 178 residues: Interleukin-10 (178 aa).

The signal sequence occupies residues 1–18; that stretch reads MHSSALLCCLVLLTGVRA. Cystine bridges form between Cys30–Cys126 and Cys80–Cys132. Residue Asn134 is glycosylated (N-linked (GlcNAc...) asparagine).

Belongs to the IL-10 family. In terms of assembly, homodimer. Interacts with IL10RA and IL10RB.

Its subcellular location is the secreted. In terms of biological role, major immune regulatory cytokine that acts on many cells of the immune system where it has profound anti-inflammatory functions, limiting excessive tissue disruption caused by inflammation. Mechanistically, IL10 binds to its heterotetrameric receptor comprising IL10RA and IL10RB leading to JAK1 and STAT2-mediated phosphorylation of STAT3. In turn, STAT3 translocates to the nucleus where it drives expression of anti-inflammatory mediators. Targets antigen-presenting cells (APCs) such as macrophages and monocytes and inhibits their release of pro-inflammatory cytokines including granulocyte-macrophage colony-stimulating factor /GM-CSF, granulocyte colony-stimulating factor/G-CSF, IL-1 alpha, IL-1 beta, IL-6, IL-8 and TNF-alpha. Also interferes with antigen presentation by reducing the expression of MHC-class II and co-stimulatory molecules, thereby inhibiting their ability to induce T cell activation. In addition, controls the inflammatory response of macrophages by reprogramming essential metabolic pathways including mTOR signaling. The polypeptide is Interleukin-10 (IL10) (Macaca fascicularis (Crab-eating macaque)).